The primary structure comprises 85 residues: Large ribosomal subunit protein bL27 (85 aa).

This sequence belongs to the bacterial ribosomal protein bL27 family.

In Variovorax paradoxus (strain S110), this protein is Large ribosomal subunit protein bL27.